Consider the following 471-residue polypeptide: Ubiquitin carboxyl-terminal hydrolase calypso (471 aa).

Positions 45 to 276 constitute a UCH catalytic domain; sequence GWLELESDPG…IRFNLMAVVP (232 aa). The Nucleophile role is filled by cysteine 131. Histidine 213 acts as the Proton donor in catalysis. The segment at 307–326 is disordered; the sequence is DEQGESGNGDSQRPDTPTTL. The span at 314–326 shows a compositional bias: polar residues; the sequence is NGDSQRPDTPTTL. Residues 375–403 enclose the ULD domain; it reads NYDKFICTFLSMLAHQGVLGELVSQHLLP. The positively charged C-terminal tail required for binding nucleosomes stretch occupies residues 405-471; sequence KKVSGQGAAN…KGRNKCRKRK (67 aa). Residues 412–471 are disordered; that stretch reads AANRISKQSNTASAGGSTTGASASTPKTQQQQAAAAKNGKSPSKTPGRRRKGRNKCRKRK. The segment covering 422-447 has biased composition (low complexity); sequence TASAGGSTTGASASTPKTQQQQAAAA. The span at 457-471 shows a compositional bias: basic residues; it reads PGRRRKGRNKCRKRK.

Belongs to the peptidase C12 family. BAP1 subfamily. As to quaternary structure, catalytic component of the polycomb repressive deubiquitinase (PR-DUB) complex, at least composed of caly/calypso, Asx and sba (MBD5/6 homolog). The PR-DUB complex associates with nucleosomes to mediate deubiquitination of histone H2AK118ub1 substrates; the association requires the positively charged C-terminal tail of caly, probably due to direct binding of DNA. Interacts (via ULD domain) with Asx (via DEUBAD domain); the interaction produces a stable heterodimer with a composite binding site for ubiquitin. Homodimerizes (via coiled-coil hinge-region between the UCH and ULD domains) to mediate assembly of 2 copies of the caly-Asx heterodimer into a bisymmetric tetramer; dimerization enhances PR-DUB association with nucleosomes.

It is found in the nucleus. It carries out the reaction Thiol-dependent hydrolysis of ester, thioester, amide, peptide and isopeptide bonds formed by the C-terminal Gly of ubiquitin (a 76-residue protein attached to proteins as an intracellular targeting signal).. Catalytic component of the polycomb repressive deubiquitinase (PR-DUB) complex, a complex that specifically mediates deubiquitination of histone H2A monoubiquitinated at 'Lys-119' (H2AK118ub1). Mediates bisymmetric organization of the PR-DUB complex and is involved in association with nucleosomes to mediate deubiquitination. Does not deubiquitinate monoubiquitinated histone H2B. Required to maintain the transcriptionally repressive state of homeotic genes throughout development. The PR-DUB complex has weak or no activity toward 'Lys-48'- and 'Lys-63'-linked polyubiquitin chains. Polycomb group (PcG) protein. In Drosophila sechellia (Fruit fly), this protein is Ubiquitin carboxyl-terminal hydrolase calypso.